The sequence spans 1431 residues: DNA-directed RNA polymerase subunit beta' (1431 aa).

The Zn(2+) site is built by Cys-66, Cys-68, Cys-81, and Cys-84. Positions 470, 472, and 474 each coordinate Mg(2+). Zn(2+) contacts are provided by Cys-813, Cys-887, Cys-894, and Cys-897.

The protein belongs to the RNA polymerase beta' chain family. In terms of assembly, the RNAP catalytic core consists of 2 alpha, 1 beta, 1 beta' and 1 omega subunit. When a sigma factor is associated with the core the holoenzyme is formed, which can initiate transcription. Mg(2+) is required as a cofactor. The cofactor is Zn(2+).

The catalysed reaction is RNA(n) + a ribonucleoside 5'-triphosphate = RNA(n+1) + diphosphate. In terms of biological role, DNA-dependent RNA polymerase catalyzes the transcription of DNA into RNA using the four ribonucleoside triphosphates as substrates. The polypeptide is DNA-directed RNA polymerase subunit beta' (Parabacteroides distasonis (strain ATCC 8503 / DSM 20701 / CIP 104284 / JCM 5825 / NCTC 11152)).